The chain runs to 346 residues: Fe(3+) ions import ATP-binding protein FbpC 2 (346 aa).

The ABC transporter domain occupies 2 to 234 (LELHRVSKSF…PNSEDIATFL (233 aa)). 34-41 (GPSGSGKT) contacts ATP.

It belongs to the ABC transporter superfamily. Fe(3+) ion importer (TC 3.A.1.10) family. As to quaternary structure, the complex is composed of two ATP-binding proteins (FbpC), two transmembrane proteins (FbpB) and a solute-binding protein (FbpA).

The protein localises to the cell inner membrane. The catalysed reaction is Fe(3+)(out) + ATP + H2O = Fe(3+)(in) + ADP + phosphate + H(+). In terms of biological role, part of the ABC transporter complex FbpABC involved in Fe(3+) ions import. Responsible for energy coupling to the transport system. The chain is Fe(3+) ions import ATP-binding protein FbpC 2 from Pectobacterium atrosepticum (strain SCRI 1043 / ATCC BAA-672) (Erwinia carotovora subsp. atroseptica).